The primary structure comprises 258 residues: MLITISPAKTLDYESPLATEEYSQPELLDQSKRLIRICRELTPAQIASLMGISDKLAGLNAARFGEWHADFTPLNARQAILAFKGDVYTGMQAESFSNKDFDFAQNHLRILSGLYGVLRPLDLMQPYRLEMGIKLENKRGKDLYAFWGDLITEKLNEALEQQGDNVLVNLASDEYFKSVNTKKLAGKIIKPVFLDEKNGKYKIISFYAKKARGLMSQFIIQNQLTQIDRLVEFNLDGYAFDESLSKGNELVFKRPEQH.

The protein belongs to the UPF0246 family.

The polypeptide is UPF0246 protein plu0566 (Photorhabdus laumondii subsp. laumondii (strain DSM 15139 / CIP 105565 / TT01) (Photorhabdus luminescens subsp. laumondii)).